Consider the following 126-residue polypeptide: Probable V-type proton ATPase subunit G (126 aa).

It belongs to the V-ATPase G subunit family. As to quaternary structure, V-ATPase is a heteromultimeric enzyme made up of two complexes: the ATP-hydrolytic V1 complex and the proton translocation V0 complex. The V1 complex consists of three catalytic AB heterodimers that form a heterohexamer, three peripheral stalks each consisting of EG heterodimers, one central rotor including subunits D and F, and the regulatory subunits C and H. The proton translocation complex V0 consists of the proton transport subunit a, a ring of proteolipid subunits c9c'', rotary subunit d, subunits e and f, and the accessory subunits vah-19/Ac45 and vah-20/PRR. Interacts with ced-1.

Subunit of the V1 complex of vacuolar(H+)-ATPase (V-ATPase), a multisubunit enzyme composed of a peripheral complex (V1) that hydrolyzes ATP and a membrane integral complex (V0) that translocates protons. V-ATPase is responsible for acidifying and maintaining the pH of intracellular compartments and in some cell types, is targeted to the plasma membrane, where it is responsible for acidifying the extracellular environment. In neurons, required for necrotic cell death by promoting intracellular acidification. This is Probable V-type proton ATPase subunit G from Caenorhabditis elegans.